We begin with the raw amino-acid sequence, 507 residues long: O-fucosyltransferase 30 (507 aa).

The chain crosses the membrane as a helical; Signal-anchor for type II membrane protein span at residues 26 to 46 (AIFLCSVSILVVFFIVVFFIT). Residues Asn-110, Asn-146, Asn-398, and Asn-410 are each glycosylated (N-linked (GlcNAc...) asparagine).

This sequence belongs to the glycosyltransferase GT106 family.

It localises to the membrane. Its pathway is glycan metabolism. The chain is O-fucosyltransferase 30 from Arabidopsis thaliana (Mouse-ear cress).